Reading from the N-terminus, the 564-residue chain is Dihydropyrimidinase-related protein 5 (564 aa).

A phosphothreonine mark is found at T509 and T514. Phosphoserine is present on residues S532 and S538. At R559 the chain carries Omega-N-methylarginine.

Belongs to the metallo-dependent hydrolases superfamily. Hydantoinase/dihydropyrimidinase family. Homotetramer, and heterotetramer with other DPYS-like proteins. Interacts with DPYSL2, DPYSL3 and DPYSL4. Interacts with MAP2 and TUBB3.

It is found in the cytoplasm. Its function is as follows. Involved in the negative regulation of dendrite outgrowth. The protein is Dihydropyrimidinase-related protein 5 (DPYSL5) of Homo sapiens (Human).